Here is a 412-residue protein sequence, read N- to C-terminus: Phosphatidylinositol 3,4,5-trisphosphate 3-phosphatase and protein-tyrosine-phosphatase PTEN1 (412 aa).

In terms of domain architecture, Phosphatase tensin-type spans 42–211 (RRLIIGGYDL…KYWSDLLSFS (170 aa)). The active-site Phosphocysteine intermediate is cysteine 152. The C2 tensin-type domain maps to 239–396 (VDSVFFVVSE…FSLELLFGPA (158 aa)).

It belongs to the PTEN phosphatase protein family. As to expression, expressed exclusively in pollen grains during the late stage of development (at protein level).

It catalyses the reaction O-phospho-L-tyrosyl-[protein] + H2O = L-tyrosyl-[protein] + phosphate. The enzyme catalyses a 1,2-diacyl-sn-glycero-3-phospho-(1D-myo-inositol-3,4,5-trisphosphate) + H2O = a 1,2-diacyl-sn-glycero-3-phospho-(1D-myo-inositol-4,5-bisphosphate) + phosphate. Its activity is regulated as follows. Inhibited by vanadate. In terms of biological role, protein tyrosine phosphatase that also exhibits lipid phosphatase activity. Can use phosphatidylinositol substrates such as PtdIns(3,4,5)P(3) as substrate. Pollen-specific phosphatase required for pollen development. The protein is Phosphatidylinositol 3,4,5-trisphosphate 3-phosphatase and protein-tyrosine-phosphatase PTEN1 of Arabidopsis thaliana (Mouse-ear cress).